The chain runs to 944 residues: Leucine--tRNA ligase (944 aa).

Residues 40-51 (PYPSGAGLHVGH) carry the 'HIGH' region motif. The 'KMSKS' region signature appears at 718–722 (KMSKS). An ATP-binding site is contributed by Lys-721.

This sequence belongs to the class-I aminoacyl-tRNA synthetase family.

The protein localises to the cytoplasm. It carries out the reaction tRNA(Leu) + L-leucine + ATP = L-leucyl-tRNA(Leu) + AMP + diphosphate. This is Leucine--tRNA ligase from Phocaeicola vulgatus (strain ATCC 8482 / DSM 1447 / JCM 5826 / CCUG 4940 / NBRC 14291 / NCTC 11154) (Bacteroides vulgatus).